Consider the following 569-residue polypeptide: Proline--tRNA ligase (569 aa).

It belongs to the class-II aminoacyl-tRNA synthetase family. ProS type 1 subfamily. Homodimer.

It localises to the cytoplasm. The enzyme catalyses tRNA(Pro) + L-proline + ATP = L-prolyl-tRNA(Pro) + AMP + diphosphate. In terms of biological role, catalyzes the attachment of proline to tRNA(Pro) in a two-step reaction: proline is first activated by ATP to form Pro-AMP and then transferred to the acceptor end of tRNA(Pro). As ProRS can inadvertently accommodate and process non-cognate amino acids such as alanine and cysteine, to avoid such errors it has two additional distinct editing activities against alanine. One activity is designated as 'pretransfer' editing and involves the tRNA(Pro)-independent hydrolysis of activated Ala-AMP. The other activity is designated 'posttransfer' editing and involves deacylation of mischarged Ala-tRNA(Pro). The misacylated Cys-tRNA(Pro) is not edited by ProRS. The chain is Proline--tRNA ligase from Legionella pneumophila (strain Corby).